Reading from the N-terminus, the 296-residue chain is Tyrosine recombinase XerC (296 aa).

The Core-binding (CB) domain occupies 1 to 84 (MNKIQESFLY…TLRSFYEFWM (84 aa)). A Tyr recombinase domain is found at 105 to 286 (YLPHFFYEEE…SNQQLRKVYL (182 aa)). Residues Arg145, Lys169, His238, Arg241, and His264 contribute to the active site. Catalysis depends on Tyr273, which acts as the O-(3'-phospho-DNA)-tyrosine intermediate.

The protein belongs to the 'phage' integrase family. XerC subfamily. As to quaternary structure, forms a cyclic heterotetrameric complex composed of two molecules of XerC and two molecules of XerD.

It is found in the cytoplasm. Its function is as follows. Site-specific tyrosine recombinase, which acts by catalyzing the cutting and rejoining of the recombining DNA molecules. The XerC-XerD complex is essential to convert dimers of the bacterial chromosome into monomers to permit their segregation at cell division. It also contributes to the segregational stability of plasmids. This is Tyrosine recombinase XerC from Staphylococcus carnosus (strain TM300).